The following is a 154-amino-acid chain: Myoglobin (154 aa).

A Globin domain is found at 2-148 (GLSDGEWQLV…FRKDMASNYK (147 aa)). At Ser-4 the chain carries Phosphoserine. Residue His-65 participates in nitrite binding. Residue His-65 coordinates O2. A Phosphothreonine modification is found at Thr-68. Residue His-94 coordinates heme b.

The protein belongs to the globin family. As to quaternary structure, monomeric.

Its subcellular location is the cytoplasm. The protein localises to the sarcoplasm. It carries out the reaction Fe(III)-heme b-[protein] + nitric oxide + H2O = Fe(II)-heme b-[protein] + nitrite + 2 H(+). The catalysed reaction is H2O2 + AH2 = A + 2 H2O. Monomeric heme protein which primary function is to store oxygen and facilitate its diffusion within muscle tissues. Reversibly binds oxygen through a pentacoordinated heme iron and enables its timely and efficient release as needed during periods of heightened demand. Depending on the oxidative conditions of tissues and cells, and in addition to its ability to bind oxygen, it also has a nitrite reductase activity whereby it regulates the production of bioactive nitric oxide. Under stress conditions, like hypoxia and anoxia, it also protects cells against reactive oxygen species thanks to its pseudoperoxidase activity. This Pongo pygmaeus (Bornean orangutan) protein is Myoglobin (MB).